The primary structure comprises 514 residues: Peptide chain release factor 3 (514 aa).

The tr-type G domain maps to 8 to 268; sequence KKRRTFAIIS…SFLAFAPEPH (261 aa). GTP-binding positions include 17–24, 85–89, and 139–142; these read SHPDAGKT, DTPGH, and NKLD.

This sequence belongs to the TRAFAC class translation factor GTPase superfamily. Classic translation factor GTPase family. PrfC subfamily.

The protein resides in the cytoplasm. Functionally, increases the formation of ribosomal termination complexes and stimulates activities of RF-1 and RF-2. It binds guanine nucleotides and has strong preference for UGA stop codons. It may interact directly with the ribosome. The stimulation of RF-1 and RF-2 is significantly reduced by GTP and GDP, but not by GMP. This is Peptide chain release factor 3 from Streptococcus mutans serotype c (strain ATCC 700610 / UA159).